The chain runs to 160 residues: Transcription elongation factor GreA (160 aa).

The stretch at 1–71 (MAEKTYPMTK…GQISTLETQI (71 aa)) forms a coiled coil.

This sequence belongs to the GreA/GreB family.

Necessary for efficient RNA polymerase transcription elongation past template-encoded arresting sites. The arresting sites in DNA have the property of trapping a certain fraction of elongating RNA polymerases that pass through, resulting in locked ternary complexes. Cleavage of the nascent transcript by cleavage factors such as GreA or GreB allows the resumption of elongation from the new 3'terminus. GreA releases sequences of 2 to 3 nucleotides. This chain is Transcription elongation factor GreA, found in Streptococcus uberis (strain ATCC BAA-854 / 0140J).